The primary structure comprises 527 residues: Transcriptional regulator ATRX (527 aa).

The interval 1 to 527 is disordered; it reads GRSVVEFGDM…RSYKQKKKRR (527 aa). Positions 14 to 23 are enriched in polar residues; the sequence is RQQSAVSSAG. Basic and acidic residues predominate over residues 27-46; sequence PSGKEENVHSPEDKRVTKSK. The span at 47–59 shows a compositional bias: basic residues; the sequence is EKSKHLRTRTGRK. Over residues 60 to 84 the composition is skewed to basic and acidic residues; that stretch reads VKSDVTDRFRKKEQSSESSEGEKKQ. Phosphoserine is present on residues S62 and S74. Residues 85 to 94 are compositionally biased toward basic residues; that stretch reads GRQRTGTRGK. Composition is skewed to basic and acidic residues over residues 95–122, 136–145, 152–194, and 204–250; these read KSTD…KLPE, NKNDTTDEAK, DKSC…EKKQ, and KRPE…KEVK. Residue K105 forms a Glycyl lysine isopeptide (Lys-Gly) (interchain with G-Cter in SUMO2) linkage. 3 positions are modified to phosphoserine: S112, S113, and S114. S162 bears the Phosphoserine mark. Citrulline is present on R184. Basic residues predominate over residues 267-297; sequence KQKKQRMSAKKKNSNTKERKRKSLRATTTKR. The interaction with DAXX stretch occupies residues 290–427; the sequence is LRATTTKRKQ…SNQVNSESDS (138 aa). Phosphoserine is present on residues S345, S346, and S354. The span at 368-382 shows a compositional bias: basic and acidic residues; sequence PENRIAKKMLLEEIK. The span at 387 to 398 shows a compositional bias: acidic residues; sequence SDEDGSSDDEPK. A compositionally biased stretch (basic and acidic residues) spans 399-410; it reads EGEKKRIGKQSE. S423, S425, and S427 each carry phosphoserine. A compositionally biased stretch (basic residues) spans 435–446; the sequence is PRYRHRLLRHKL. Phosphoserine occurs at positions 449 and 453. Basic and acidic residues-rich tracts occupy residues 454–469 and 509–518; these read GGEK…ETKG and KKAELEENQR.

The protein belongs to the SNF2/RAD54 helicase family. Interacts with DAXX to form the chromatin remodeling complex ATRX:DAXX. Probably binds EZH2. Binds annexin V in a calcium and phosphatidylcholine/phosphatidylserine-dependent manner. Interacts directly with CBX5 via the PxVxL motif. Interacts with RAD50, MRE11 and NBN; indicative for an association with the MRN complex. Interacts with histone MACROH2A1. Interacts with histone H3 peptides methylated at 'Lys-10' with preferences H3K9me3 &gt; H3K9me2 &gt; H3K9me1. Interacts with histone H3 peptides unmethylated at 'Lys-5' (H3K4me0). Interacts with MECP2, SMC1 and SMC3. Interacts with SETDB1, TRIM28 and ZNF274. In terms of processing, citrullinated by PADI4.

The protein resides in the nucleus. It localises to the chromosome. The protein localises to the telomere. Its subcellular location is the PML body. It catalyses the reaction ATP + H2O = ADP + phosphate + H(+). Its function is as follows. Involved in transcriptional regulation and chromatin remodeling. Facilitates DNA replication in multiple cellular environments and is required for efficient replication of a subset of genomic loci. Binds to DNA tandem repeat sequences in both telomeres and euchromatin and in vitro binds DNA quadruplex structures. May help stabilizing G-rich regions into regular chromatin structures by remodeling G4 DNA and incorporating H3.3-containing nucleosomes. Catalytic component of the chromatin remodeling complex ATRX:DAXX which has ATP-dependent DNA translocase activity and catalyzes the replication-independent deposition of histone H3.3 in pericentric DNA repeats outside S-phase and telomeres, and the in vitro remodeling of H3.3-containing nucleosomes. Its heterochromatin targeting is proposed to involve a combinatorial readout of histone H3 modifications (specifically methylation states of H3K9 and H3K4) and association with CBX5. Involved in maintaining telomere structural integrity in embryonic stem cells probably implying recruitment of CBX5 to telomeres. May be involved in transcriptional regulation of telomeric repeat-containing RNA (TERRA). Acts as a negative regulator of chromatin incorporation of transcriptionally repressive histone MACROH2A1, particularily at telomeres. Participates in the allele-specific gene expression at the imprinted IGF2/H19 gene locus. On the maternal allele, required for the chromatin occupancy of SMC1 and CTCTF within the H19 imprinting control region (ICR) and involved in esatblishment of histone tails modifications in the ICR. Binds to zinc-finger coding genes with atypical chromatin signatures and regulates its H3K9me3 levels. Forms a complex with ZNF274, TRIM28 and SETDB1 to facilitate the deposition and maintenance of H3K9me3 at the 3' exons of zinc-finger genes. In Rattus norvegicus (Rat), this protein is Transcriptional regulator ATRX (Atrx).